The chain runs to 42 residues: GTTCYCGKTIGIYWFGTKTCPSNRGYTGSCGYFLGICCYPVD.

Disulfide bonds link cysteine 4–cysteine 37, cysteine 6–cysteine 30, and cysteine 20–cysteine 38.

Belongs to the sea anemone type 3 (BDS) potassium channel toxin family.

It localises to the secreted. The protein resides in the nematocyst. Its function is as follows. Peptide with both antimicrobial and neurotoxin activities. This toxin acts both on ERG potassium channels and sodium channels. It potently and reversibly inhibits human Kv11.1/KCNH2/ERG1 (IC(50)=34 nM), rat Kv11.1/KCNH2/ERG1 and Kv11.3/KCNH7/ERG3 voltage-gated potassium channels in a similar potency. It acts as a gating-modifier toxin that shifts the voltage-dependence of ERG activation in the positive direction and suppresses its current amplitudes elicited by strong depolarizing pulses. On sodium channels, it blocks Nav1.2/SCN2A (EC(50)=31 nM), Nav1.3/SCN3A, Nav1.4/SCN4A, Nav1.5/SCN5A, Nav1.6/SCN8A, Nav1.8/SCN10A (EC(50)=92 nM). It may act by binding at site 1 or close by, only when the pore is in an open configuration. Shows antibacterial activity against the Gram-negative bacterium S.typhimurium, but not on the bacteria B.subtilis, S.aureus, and P.aeruginosa. In vivo, this toxin does not induce neurotoxic symptoms when injected into mice. This chain is Kappa-actitoxin-Ael2a, found in Anthopleura elegantissima (Green aggregating anemone).